The following is a 366-amino-acid chain: Fe-S cluster assembly protein DRE2 (366 aa).

An N-terminal SAM-like domain region spans residues 8 to 167 (AQGSGRFLLL…KPDFGAQQAV (160 aa)). Residues 100 to 136 (RNRDNQIWGSGSDSAAGLGSSDGGGGGGGGEKKSSSE) are disordered. Positions 108-118 (GSGSDSAAGLG) are enriched in low complexity. Residues 119–128 (SSDGGGGGGG) show a composition bias toward gly residues. The linker stretch occupies residues 168–258 (PLKLGRKKNL…EEELLGEFDM (91 aa)). The [2Fe-2S] cluster site is built by cysteine 268, cysteine 279, cysteine 282, and cysteine 284. The fe-S binding site A stretch occupies residues 268–284 (CRPKAGKRRRACKDCTC). Cysteine 329, cysteine 332, cysteine 340, and cysteine 343 together coordinate [4Fe-4S] cluster. 2 short sequence motifs (cx2C motif) span residues 329 to 332 (CGNC) and 340 to 343 (CDGC). A fe-S binding site B region spans residues 329–343 (CGNCALGDAFRCDGC).

It belongs to the anamorsin family. Monomer. Interacts with TAH18. Interacts with MIA40. [2Fe-2S] cluster serves as cofactor. [4Fe-4S] cluster is required as a cofactor.

It localises to the cytoplasm. It is found in the mitochondrion intermembrane space. In terms of biological role, component of the cytosolic iron-sulfur (Fe-S) protein assembly (CIA) machinery required for the maturation of extramitochondrial Fe-S proteins. Part of an electron transfer chain functioning in an early step of cytosolic Fe-S biogenesis, facilitating the de novo assembly of a [4Fe-4S] cluster on the scaffold complex CFD1-NBP35. Electrons are transferred to DRE2 from NADPH via the FAD- and FMN-containing protein TAH18. TAH18-DRE2 are also required for the assembly of the diferric tyrosyl radical cofactor of ribonucleotide reductase (RNR), probably by providing electrons for reduction during radical cofactor maturation in the catalytic small subunit RNR2. The polypeptide is Fe-S cluster assembly protein DRE2 (Paracoccidioides lutzii (strain ATCC MYA-826 / Pb01) (Paracoccidioides brasiliensis)).